The chain runs to 161 residues: 2-C-methyl-D-erythritol 2,4-cyclodiphosphate synthase (161 aa).

Residues Asp10 and His12 each coordinate a divalent metal cation. 4-CDP-2-C-methyl-D-erythritol 2-phosphate is bound by residues 10-12 (DVH) and 36-37 (HS). His44 contacts a divalent metal cation. 4-CDP-2-C-methyl-D-erythritol 2-phosphate is bound by residues 58–60 (DIG), 63–67 (FPDTD), 102–108 (AQVPKMA), 134–137 (TTTE), Phe141, and Arg144.

The protein belongs to the IspF family. As to quaternary structure, homotrimer. Requires a divalent metal cation as cofactor.

It carries out the reaction 4-CDP-2-C-methyl-D-erythritol 2-phosphate = 2-C-methyl-D-erythritol 2,4-cyclic diphosphate + CMP. Its pathway is isoprenoid biosynthesis; isopentenyl diphosphate biosynthesis via DXP pathway; isopentenyl diphosphate from 1-deoxy-D-xylulose 5-phosphate: step 4/6. In terms of biological role, involved in the biosynthesis of isopentenyl diphosphate (IPP) and dimethylallyl diphosphate (DMAPP), two major building blocks of isoprenoid compounds. Catalyzes the conversion of 4-diphosphocytidyl-2-C-methyl-D-erythritol 2-phosphate (CDP-ME2P) to 2-C-methyl-D-erythritol 2,4-cyclodiphosphate (ME-CPP) with a corresponding release of cytidine 5-monophosphate (CMP). This chain is 2-C-methyl-D-erythritol 2,4-cyclodiphosphate synthase, found in Shewanella baltica (strain OS223).